The following is a 442-amino-acid chain: D-serine dehydratase (442 aa).

Lysine 118 is modified (N6-(pyridoxal phosphate)lysine).

This sequence belongs to the serine/threonine dehydratase family. DsdA subfamily. In terms of assembly, monomer. Requires pyridoxal 5'-phosphate as cofactor.

The enzyme catalyses D-serine = pyruvate + NH4(+). This Shigella flexneri serotype 5b (strain 8401) protein is D-serine dehydratase.